The primary structure comprises 532 residues: FAD-dependent monooxygenase hkm7 (532 aa).

FAD is bound by residues 191-193 (RIY) and Asp261.

The protein belongs to the PheA/TfdB FAD monooxygenase family.

It participates in secondary metabolite biosynthesis. FAD-dependent monooxygenase; part of the gene cluster that mediates the biosynthesis of hancockiamides, an unusual new family of N-cinnamoylated piperazines. The NRPS hkm10 and the NmrA-like reductase hkm9 are proposed to convert two molecules of L-Phe to the intermediary piperazine called xenocockiamide A. Xenocockiamide A is then converted to hancockiamide D via a series of hydroxylations and O-methylations. The tyrosinase hkm6 may catalyze an aromatic hydroxylation, then the 2-oxoglutarate-dependent Fe(II) dioxygenase hkm4 and the FAD-dependent phenol hydroxylase hkm7 may catalyze consecutive hydroxylations to install 2 more hydroxy groups, and the methyltransferase hkm8 probably catalyzes two methylations using 2 molecules of S-adenosyl-L-methionine (SAM). The NRPS hkm11 activates and transfers trans-cinnamate supplied by the PAL hkm12 to hancockiamide D and produces hancockiamide A. NRPS Hkm11 has the flexibility to tolerate the bulky hancockiamide G as a substrate and the absence of the acetyl-transferase hkm3 opens up the opportunity for hkm11 to introduce a second N-cinnamoyl moiety. The cytochrome P450 monooxygenase hkm5 catalyzes the methylenedioxy bridge formation, converting hancockiamide A into hancockiamide G. Hkm5 can also convert hancockiamide B into hancockiamide C, and hancockiamide D into hancockiamide H. The N-acetyltransferase hkm3 finally transfers an acetyl group to 1-N of piperazine, converting hancockiamide A into hancockiamide B and hancockiamide G into hancockiamide C. This is FAD-dependent monooxygenase hkm7 from Aspergillus hancockii.